We begin with the raw amino-acid sequence, 380 residues long: MSTEMLGMILAGGQGTRLGKLTKTTAKPSVPFGGRYRIIDFTLSNLANSGVNTAGVITQYQPLELNRHIQNGASWGLNERGAGVTILQPYASSEGEKFFEGTAHAIYQNIAYIDSYNPQYLLILSGDHIYKMDYQAMLDYHKAKKASLTVAVMPVEKEEAKRFGIMNTDDTDRIIEFEEKPAKPKSNLASMGIYIFNWPTLKQYLTESYATDGAMEDFGHDVIPAYLTHNEASYAYAFRGYWKDVGTIQSLWEANMEFLNPNNPLNIGNRNWRIFSQNEALPPMFLTKTAKVAGSMIVDGCYVAGSIQHSILSQNVKIGEGSVIKDSMIMPNAVIGKNVTVDHAIVGENAIIGDNGKVVGKPNEISVVGYGEVLGRTEKE.

Residues glycine 164, 179-180, and serine 190 contribute to the alpha-D-glucose 1-phosphate site; that span reads EK.

The protein belongs to the bacterial/plant glucose-1-phosphate adenylyltransferase family. In terms of assembly, homotetramer.

It catalyses the reaction alpha-D-glucose 1-phosphate + ATP + H(+) = ADP-alpha-D-glucose + diphosphate. Its pathway is glycan biosynthesis; glycogen biosynthesis. Involved in the biosynthesis of ADP-glucose, a building block required for the elongation reactions to produce glycogen. Catalyzes the reaction between ATP and alpha-D-glucose 1-phosphate (G1P) to produce pyrophosphate and ADP-Glc. This chain is Glucose-1-phosphate adenylyltransferase, found in Lacticaseibacillus casei (strain BL23) (Lactobacillus casei).